The chain runs to 417 residues: Tryptophan synthase beta chain (417 aa).

At Lys-111 the chain carries N6-(pyridoxal phosphate)lysine.

Belongs to the TrpB family. In terms of assembly, tetramer of two alpha and two beta chains. Pyridoxal 5'-phosphate serves as cofactor.

It carries out the reaction (1S,2R)-1-C-(indol-3-yl)glycerol 3-phosphate + L-serine = D-glyceraldehyde 3-phosphate + L-tryptophan + H2O. It participates in amino-acid biosynthesis; L-tryptophan biosynthesis; L-tryptophan from chorismate: step 5/5. In terms of biological role, the beta subunit is responsible for the synthesis of L-tryptophan from indole and L-serine. This chain is Tryptophan synthase beta chain, found in Fervidobacterium nodosum (strain ATCC 35602 / DSM 5306 / Rt17-B1).